The sequence spans 333 residues: NADH-quinone oxidoreductase subunit H (333 aa).

Helical transmembrane passes span 17–37, 88–108, 117–137, 159–179, 191–211, 241–261, 273–293, and 313–333; these read IFFA…TYGI, FILA…ALPF, IGVG…GVVT, ISYE…SGSL, VWFI…AVAE, FFML…TVLF, FIPG…LFIW, and VLLP…QLFF.

This sequence belongs to the complex I subunit 1 family. As to quaternary structure, NDH-1 is composed of 14 different subunits. Subunits NuoA, H, J, K, L, M, N constitute the membrane sector of the complex.

The protein localises to the cell membrane. It carries out the reaction a quinone + NADH + 5 H(+)(in) = a quinol + NAD(+) + 4 H(+)(out). Its function is as follows. NDH-1 shuttles electrons from NADH, via FMN and iron-sulfur (Fe-S) centers, to quinones in the respiratory chain. The immediate electron acceptor for the enzyme in this species is believed to be ubiquinone. Couples the redox reaction to proton translocation (for every two electrons transferred, four hydrogen ions are translocated across the cytoplasmic membrane), and thus conserves the redox energy in a proton gradient. This subunit may bind ubiquinone. The chain is NADH-quinone oxidoreductase subunit H from Anoxybacillus flavithermus (strain DSM 21510 / WK1).